We begin with the raw amino-acid sequence, 468 residues long: Cyclin-dependent kinase 14 (468 aa).

Ser-24, Ser-77, and Ser-94 each carry phosphoserine. Residues 102–131 (FKSSSAGKESPKVRRHSSPSSPTSPKFGKA) are disordered. Residue Ser-133 is modified to Phosphoserine. Residues 134 to 418 (YEKLEKLGEG…AQAALSHEYF (285 aa)) enclose the Protein kinase domain. Residues 140–148 (LGEGSYATV) and Lys-163 contribute to the ATP site. Asp-255 serves as the catalytic Proton acceptor. The tract at residues 448–468 (ESMRAFGKNSSYGKSLSNSKH) is disordered. The segment covering 455–468 (KNSSYGKSLSNSKH) has biased composition (polar residues).

It belongs to the protein kinase superfamily. CMGC Ser/Thr protein kinase family. CDC2/CDKX subfamily. Found in a complex with LRP6, CCNY and CAPRIN2 during G2/M stage; CAPRIN2 functions as a scaffold for the complex by binding to CCNY via its N terminus and to CDK14 via its C terminus. Interacts with CCNY; CCNY mediates its recruitment to the plasma membrane and promotes phosphorylation of LRP6. Interacts with CCDN3 and CDKN1A. Interacts with SEPT8. Interacts with 14-3-3 proteina YWHAB, YWHAE, YWHAH and YWHAQ.

Its subcellular location is the cell membrane. The protein resides in the cytoplasm. It is found in the nucleus. It catalyses the reaction L-seryl-[protein] + ATP = O-phospho-L-seryl-[protein] + ADP + H(+). It carries out the reaction L-threonyl-[protein] + ATP = O-phospho-L-threonyl-[protein] + ADP + H(+). Its activity is regulated as follows. Serine/threonine-protein kinase activity is promoted by associated cyclins CCDN3 and CCNY and repressed by CDKN1A. Serine/threonine-protein kinase involved in the control of the eukaryotic cell cycle, whose activity is controlled by an associated cyclin. Acts as a cell-cycle regulator of Wnt signaling pathway during G2/M phase by mediating the phosphorylation of LRP6 at 'Ser-1490', leading to the activation of the Wnt signaling pathway. Acts as a regulator of cell cycle progression and cell proliferation via its interaction with CCDN3. Phosphorylates RB1 in vitro, however the relevance of such result remains to be confirmed in vivo. May also play a role in meiosis, neuron differentiation and may indirectly act as a negative regulator of insulin-responsive glucose transport. In Oryctolagus cuniculus (Rabbit), this protein is Cyclin-dependent kinase 14 (CDK14).